Reading from the N-terminus, the 383-residue chain is Chaperone protein DnaJ (383 aa).

Positions 6–70 constitute a J domain; sequence DYYDVLGVGR…QKRAAYDQYG (65 aa). The segment at 140–222 adopts a CR-type zinc-finger fold; it reads GKETKISYSR…CHGTGREEER (83 aa). The Zn(2+) site is built by cysteine 153, cysteine 156, cysteine 170, cysteine 173, cysteine 196, cysteine 199, cysteine 210, and cysteine 213. CXXCXGXG motif repeat units lie at residues 153-160, 170-177, 196-203, and 210-217; these read CHTCHGSG, CHKCHGAG, CDVCGGTG, and CDTCHGTG.

This sequence belongs to the DnaJ family. As to quaternary structure, homodimer. Zn(2+) serves as cofactor.

The protein resides in the cytoplasm. Functionally, participates actively in the response to hyperosmotic and heat shock by preventing the aggregation of stress-denatured proteins and by disaggregating proteins, also in an autonomous, DnaK-independent fashion. Unfolded proteins bind initially to DnaJ; upon interaction with the DnaJ-bound protein, DnaK hydrolyzes its bound ATP, resulting in the formation of a stable complex. GrpE releases ADP from DnaK; ATP binding to DnaK triggers the release of the substrate protein, thus completing the reaction cycle. Several rounds of ATP-dependent interactions between DnaJ, DnaK and GrpE are required for fully efficient folding. Also involved, together with DnaK and GrpE, in the DNA replication of plasmids through activation of initiation proteins. The chain is Chaperone protein DnaJ from Latilactobacillus sakei subsp. sakei (strain 23K) (Lactobacillus sakei subsp. sakei).